Here is an 88-residue protein sequence, read N- to C-terminus: Small ribosomal subunit protein uS15 (88 aa).

It belongs to the universal ribosomal protein uS15 family. As to quaternary structure, part of the 30S ribosomal subunit. Forms a bridge to the 50S subunit in the 70S ribosome, contacting the 23S rRNA.

In terms of biological role, one of the primary rRNA binding proteins, it binds directly to 16S rRNA where it helps nucleate assembly of the platform of the 30S subunit by binding and bridging several RNA helices of the 16S rRNA. Its function is as follows. Forms an intersubunit bridge (bridge B4) with the 23S rRNA of the 50S subunit in the ribosome. The sequence is that of Small ribosomal subunit protein uS15 from Polaromonas sp. (strain JS666 / ATCC BAA-500).